Here is a 379-residue protein sequence, read N- to C-terminus: UDP-4-amino-4-deoxy-L-arabinose--oxoglutarate aminotransferase (379 aa).

Lys-182 is modified (N6-(pyridoxal phosphate)lysine).

The protein belongs to the DegT/DnrJ/EryC1 family. ArnB subfamily. In terms of assembly, homodimer. The cofactor is pyridoxal 5'-phosphate.

The enzyme catalyses UDP-4-amino-4-deoxy-beta-L-arabinose + 2-oxoglutarate = UDP-beta-L-threo-pentopyranos-4-ulose + L-glutamate. It participates in nucleotide-sugar biosynthesis; UDP-4-deoxy-4-formamido-beta-L-arabinose biosynthesis; UDP-4-deoxy-4-formamido-beta-L-arabinose from UDP-alpha-D-glucuronate: step 2/3. It functions in the pathway bacterial outer membrane biogenesis; lipopolysaccharide biosynthesis. Functionally, catalyzes the conversion of UDP-4-keto-arabinose (UDP-Ara4O) to UDP-4-amino-4-deoxy-L-arabinose (UDP-L-Ara4N). The modified arabinose is attached to lipid A and is required for resistance to polymyxin and cationic antimicrobial peptides. This Escherichia coli (strain K12 / DH10B) protein is UDP-4-amino-4-deoxy-L-arabinose--oxoglutarate aminotransferase.